The sequence spans 319 residues: 33 kDa chaperonin (319 aa).

The segment covering 1 to 10 has biased composition (basic and acidic residues); sequence MTDASGSERL. The segment at 1–25 is disordered; sequence MTDASGSERLKRAKGISEGTPSSLP. 2 disulfides stabilise this stretch: C261/C263 and C294/C297.

It belongs to the HSP33 family. In terms of processing, under oxidizing conditions two disulfide bonds are formed involving the reactive cysteines. Under reducing conditions zinc is bound to the reactive cysteines and the protein is inactive.

The protein localises to the cytoplasm. In terms of biological role, redox regulated molecular chaperone. Protects both thermally unfolding and oxidatively damaged proteins from irreversible aggregation. Plays an important role in the bacterial defense system toward oxidative stress. In Synechococcus sp. (strain JA-2-3B'a(2-13)) (Cyanobacteria bacterium Yellowstone B-Prime), this protein is 33 kDa chaperonin.